The sequence spans 183 residues: MSRKARDPIVLPQGVEVSIQNNEILVKGPKGSLKQVLAPEVVIDIKGREVFVHPAPYVVDRPSRMQGLFWALISNMVQGVSVGFEKRLEMIGVGFRASVQGSILDLSIGVSHPTKIPIPADIQVSVEKNTIISVKGINKQLVGEFAANIRAKRKPEPYKGKGIRYENEYVRRKAGKAAKTGKK.

The protein belongs to the universal ribosomal protein uL6 family. As to quaternary structure, part of the 50S ribosomal subunit.

Its function is as follows. This protein binds to the 23S rRNA, and is important in its secondary structure. It is located near the subunit interface in the base of the L7/L12 stalk, and near the tRNA binding site of the peptidyltransferase center. The chain is Large ribosomal subunit protein uL6 from Chlamydia abortus (strain DSM 27085 / S26/3) (Chlamydophila abortus).